Reading from the N-terminus, the 570-residue chain is Dihydroxy-acid dehydratase (570 aa).

Cys-61 contacts [2Fe-2S] cluster. Asp-94 serves as a coordination point for Mg(2+). Cys-135 is a [2Fe-2S] cluster binding site. 2 residues coordinate Mg(2+): Asp-136 and Lys-137. Lys-137 is modified (N6-carboxylysine). Cys-207 contacts [2Fe-2S] cluster. A Mg(2+)-binding site is contributed by Glu-459. Ser-485 serves as the catalytic Proton acceptor.

It belongs to the IlvD/Edd family. Homodimer. It depends on [2Fe-2S] cluster as a cofactor. Mg(2+) serves as cofactor.

It carries out the reaction (2R)-2,3-dihydroxy-3-methylbutanoate = 3-methyl-2-oxobutanoate + H2O. The catalysed reaction is (2R,3R)-2,3-dihydroxy-3-methylpentanoate = (S)-3-methyl-2-oxopentanoate + H2O. Its pathway is amino-acid biosynthesis; L-isoleucine biosynthesis; L-isoleucine from 2-oxobutanoate: step 3/4. It participates in amino-acid biosynthesis; L-valine biosynthesis; L-valine from pyruvate: step 3/4. Functionally, functions in the biosynthesis of branched-chain amino acids. Catalyzes the dehydration of (2R,3R)-2,3-dihydroxy-3-methylpentanoate (2,3-dihydroxy-3-methylvalerate) into 2-oxo-3-methylpentanoate (2-oxo-3-methylvalerate) and of (2R)-2,3-dihydroxy-3-methylbutanoate (2,3-dihydroxyisovalerate) into 2-oxo-3-methylbutanoate (2-oxoisovalerate), the penultimate precursor to L-isoleucine and L-valine, respectively. The chain is Dihydroxy-acid dehydratase from Lactococcus lactis subsp. cremoris (strain MG1363).